Consider the following 335-residue polypeptide: S-adenosylmethionine decarboxylase proenzyme (335 aa).

Catalysis depends on residues Glu-12 and Glu-15. The Schiff-base intermediate with substrate; via pyruvic acid role is filled by Ser-70. Pyruvic acid (Ser); by autocatalysis is present on Ser-70. Cys-84 acts as the Proton donor; for catalytic activity in catalysis. Catalysis depends on proton acceptor; for processing activity residues Ser-231 and His-245.

Belongs to the eukaryotic AdoMetDC family. Pyruvate serves as cofactor. In terms of processing, is synthesized initially as an inactive proenzyme. Formation of the active enzyme involves a self-maturation process in which the active site pyruvoyl group is generated from an internal serine residue via an autocatalytic post-translational modification. Two non-identical subunits are generated from the proenzyme in this reaction, and the pyruvate is formed at the N-terminus of the alpha chain, which is derived from the carboxyl end of the proenzyme. The post-translation cleavage follows an unusual pathway, termed non-hydrolytic serinolysis, in which the side chain hydroxyl group of the serine supplies its oxygen atom to form the C-terminus of the beta chain, while the remainder of the serine residue undergoes an oxidative deamination to produce ammonia and the pyruvoyl group blocking the N-terminus of the alpha chain.

It carries out the reaction S-adenosyl-L-methionine + H(+) = S-adenosyl 3-(methylsulfanyl)propylamine + CO2. Its pathway is amine and polyamine biosynthesis; S-adenosylmethioninamine biosynthesis; S-adenosylmethioninamine from S-adenosyl-L-methionine: step 1/1. Its function is as follows. Essential for biosynthesis of the polyamines spermidine and spermine. Promotes maintenance and self-renewal of embryonic stem cells, by maintaining spermine levels. The polypeptide is S-adenosylmethionine decarboxylase proenzyme (amd1) (Xenopus laevis (African clawed frog)).